The sequence spans 137 residues: Sec-independent protein translocase protein TatB (137 aa).

Residues 2–22 (FANIGWGEMLILVIAGLVILG) traverse the membrane as a helical segment. A disordered region spans residues 92–137 (FFTGKFDQQNGKPAAGQEKPVTPVNPPVTATPPSESTATPFDSDAT). The span at 122–131 (TPPSESTATP) shows a compositional bias: low complexity.

It belongs to the TatB family. In terms of assembly, the Tat system comprises two distinct complexes: a TatABC complex, containing multiple copies of TatA, TatB and TatC subunits, and a separate TatA complex, containing only TatA subunits. Substrates initially bind to the TatABC complex, which probably triggers association of the separate TatA complex to form the active translocon.

Its subcellular location is the cell membrane. Part of the twin-arginine translocation (Tat) system that transports large folded proteins containing a characteristic twin-arginine motif in their signal peptide across membranes. Together with TatC, TatB is part of a receptor directly interacting with Tat signal peptides. TatB may form an oligomeric binding site that transiently accommodates folded Tat precursor proteins before their translocation. The sequence is that of Sec-independent protein translocase protein TatB from Mycobacterium sp. (strain JLS).